Reading from the N-terminus, the 313-residue chain is Porphobilinogen deaminase (313 aa).

Position 242 is an S-(dipyrrolylmethanemethyl)cysteine (C242).

Belongs to the HMBS family. As to quaternary structure, monomer. Dipyrromethane is required as a cofactor.

It carries out the reaction 4 porphobilinogen + H2O = hydroxymethylbilane + 4 NH4(+). It functions in the pathway porphyrin-containing compound metabolism; protoporphyrin-IX biosynthesis; coproporphyrinogen-III from 5-aminolevulinate: step 2/4. In terms of biological role, tetrapolymerization of the monopyrrole PBG into the hydroxymethylbilane pre-uroporphyrinogen in several discrete steps. This chain is Porphobilinogen deaminase, found in Pseudomonas paraeruginosa (strain DSM 24068 / PA7) (Pseudomonas aeruginosa (strain PA7)).